A 139-amino-acid polypeptide reads, in one-letter code: Inactive palmitoleoyl-protein carboxylesterase notum1b (139 aa).

Belongs to the pectinacetylesterase family. Notum subfamily.

In terms of biological role, probable inactive palmitoleoyl-protein carboxylesterase. In Danio rerio (Zebrafish), this protein is Inactive palmitoleoyl-protein carboxylesterase notum1b.